Consider the following 213-residue polypeptide: Orotate phosphoribosyltransferase (213 aa).

A 5-phospho-alpha-D-ribose 1-diphosphate-binding site is contributed by Lys26. 34–35 (FF) lines the orotate pocket. Residues 72–73 (YK), Arg99, Lys100, Lys103, His105, and 124–132 (DDVITAGTA) each bind 5-phospho-alpha-D-ribose 1-diphosphate. Residues Thr128 and Arg156 each coordinate orotate.

The protein belongs to the purine/pyrimidine phosphoribosyltransferase family. PyrE subfamily. In terms of assembly, homodimer. Mg(2+) is required as a cofactor.

It catalyses the reaction orotidine 5'-phosphate + diphosphate = orotate + 5-phospho-alpha-D-ribose 1-diphosphate. The protein operates within pyrimidine metabolism; UMP biosynthesis via de novo pathway; UMP from orotate: step 1/2. Its function is as follows. Catalyzes the transfer of a ribosyl phosphate group from 5-phosphoribose 1-diphosphate to orotate, leading to the formation of orotidine monophosphate (OMP). The sequence is that of Orotate phosphoribosyltransferase from Shigella dysenteriae serotype 1 (strain Sd197).